The chain runs to 337 residues: Heat-inducible transcription repressor HrcA (337 aa).

Belongs to the HrcA family.

Functionally, negative regulator of class I heat shock genes (grpE-dnaK-dnaJ and groELS operons). Prevents heat-shock induction of these operons. The polypeptide is Heat-inducible transcription repressor HrcA (Polaromonas naphthalenivorans (strain CJ2)).